The sequence spans 414 residues: Peptide chain release factor subunit 1 (414 aa).

The protein belongs to the eukaryotic release factor 1 family. In terms of assembly, heterodimer of two subunits, one of which binds GTP.

The protein localises to the cytoplasm. Its function is as follows. Directs the termination of nascent peptide synthesis (translation) in response to the termination codons UAA, UAG and UGA. The chain is Peptide chain release factor subunit 1 from Methanococcoides burtonii (strain DSM 6242 / NBRC 107633 / OCM 468 / ACE-M).